We begin with the raw amino-acid sequence, 247 residues long: Opacity protein opA52 (247 aa).

Residue Ala1 is a signal peptide.

This sequence belongs to the opacity porin family.

It is found in the cell outer membrane. Its function is as follows. Implicated in a number of adherence functions. OPA proteins are implicated in pathogenesis and are subject to phase variation. In Neisseria gonorrhoeae, this protein is Opacity protein opA52 (opaG).